We begin with the raw amino-acid sequence, 426 residues long: 3-phosphoshikimate 1-carboxyvinyltransferase (426 aa).

3-phosphoshikimate contacts are provided by K22, S23, and R27. K22 is a phosphoenolpyruvate binding site. Phosphoenolpyruvate-binding residues include G96 and R124. Residues S170 and S171 each contribute to the 3-phosphoshikimate site. Q172 contributes to the phosphoenolpyruvate binding site. Residues S198, D314, N337, and K341 each coordinate 3-phosphoshikimate. D314 acts as the Proton acceptor in catalysis. Positions 345, 387, and 412 each coordinate phosphoenolpyruvate.

It belongs to the EPSP synthase family. As to quaternary structure, homotetramer.

Its subcellular location is the cytoplasm. It catalyses the reaction 3-phosphoshikimate + phosphoenolpyruvate = 5-O-(1-carboxyvinyl)-3-phosphoshikimate + phosphate. The protein operates within metabolic intermediate biosynthesis; chorismate biosynthesis; chorismate from D-erythrose 4-phosphate and phosphoenolpyruvate: step 6/7. In terms of biological role, catalyzes the transfer of the enolpyruvyl moiety of phosphoenolpyruvate (PEP) to the 5-hydroxyl of shikimate-3-phosphate (S3P) to produce enolpyruvyl shikimate-3-phosphate and inorganic phosphate. This chain is 3-phosphoshikimate 1-carboxyvinyltransferase, found in Vibrio cholerae serotype O1 (strain ATCC 39315 / El Tor Inaba N16961).